The chain runs to 142 residues: Large ribosomal subunit protein uL11 (142 aa).

Belongs to the universal ribosomal protein uL11 family. In terms of assembly, part of the ribosomal stalk of the 50S ribosomal subunit. Interacts with L10 and the large rRNA to form the base of the stalk. L10 forms an elongated spine to which L12 dimers bind in a sequential fashion forming a multimeric L10(L12)X complex. One or more lysine residues are methylated.

In terms of biological role, forms part of the ribosomal stalk which helps the ribosome interact with GTP-bound translation factors. The polypeptide is Large ribosomal subunit protein uL11 (Parvibaculum lavamentivorans (strain DS-1 / DSM 13023 / NCIMB 13966)).